A 515-amino-acid chain; its full sequence is Probable cytosol aminopeptidase (515 aa).

The Mn(2+) site is built by Lys-279 and Asp-284. Lys-291 is an active-site residue. Mn(2+) is bound by residues Asp-302, Asp-361, and Glu-363. The active site involves Arg-365.

It belongs to the peptidase M17 family. It depends on Mn(2+) as a cofactor.

The protein resides in the cytoplasm. It carries out the reaction Release of an N-terminal amino acid, Xaa-|-Yaa-, in which Xaa is preferably Leu, but may be other amino acids including Pro although not Arg or Lys, and Yaa may be Pro. Amino acid amides and methyl esters are also readily hydrolyzed, but rates on arylamides are exceedingly low.. The catalysed reaction is Release of an N-terminal amino acid, preferentially leucine, but not glutamic or aspartic acids.. Its function is as follows. Presumably involved in the processing and regular turnover of intracellular proteins. Catalyzes the removal of unsubstituted N-terminal amino acids from various peptides. The protein is Probable cytosol aminopeptidase of Mycobacterium tuberculosis (strain ATCC 25177 / H37Ra).